Consider the following 1868-residue polypeptide: Dedicator of cytokinesis protein 5 (1868 aa).

An SH3 domain is found at 8-69 (KRQKYGVAIY…PETYIHLKEA (62 aa)). Position 365 is a phosphoserine (S365). The 185-residue stretch at 443-627 (RNDIYVTLIH…DSFQIATLIC (185 aa)) folds into the C2 DOCK-type domain. Position 818 is an N6-acetyllysine (K818). The 412-residue stretch at 1231–1642 (YKDKKREDIY…VEKLYGVITL (412 aa)) folds into the DOCKER domain. The span at 1681-1692 (STSSNSSDNASS) shows a compositional bias: low complexity. Disordered regions lie at residues 1681 to 1730 (STSS…RISK) and 1742 to 1868 (QVIA…PGSQ). Over residues 1704–1728 (LFERRASSGARVEDLPPKEDSENRI) the composition is skewed to basic and acidic residues. Residues S1755, S1765, S1771, S1784, and S1788 each carry the phosphoserine modification. At T1793 the chain carries Phosphothreonine. The span at 1796–1810 (ATRTLSSPSLQTDGL) shows a compositional bias: polar residues. A phosphoserine mark is found at S1832 and S1867.

The protein belongs to the DOCK family. In terms of assembly, interacts with CRK and CRKL. Interacts (via N-terminus) with tensin TNS3 (via N-terminus); the interaction increases DOCK5 guanine nucleotide exchange activity towards Rac. Interacts with ELMO1. In terms of tissue distribution, highly expressed in lens, where it predominantly localizes to anterior epithelial cells, and is weakly expressed in lens fiber (at protein level). Expressed in brain, eye, lung, spleen and kidney, but not in thymus or peripheral blood leukocytes.

The protein localises to the cytoplasm. It localises to the cell membrane. Its subcellular location is the cell projection. The protein resides in the podosome. Its function is as follows. Guanine nucleotide exchange factor (GEF) for Rho and Rac. GEF proteins activate small GTPases by exchanging bound GDP for free GTP. Along with DOCK1, mediates CRK/CRKL regulation of epithelial and endothelial cell spreading and migration on type IV collagen. This is Dedicator of cytokinesis protein 5 from Mus musculus (Mouse).